A 216-amino-acid chain; its full sequence is Maleylacetoacetate isomerase (216 aa).

The residue at position 1 (Met-1) is an N-acetylmethionine. Residues 4–87 form the GST N-terminal domain; the sequence is GKPILYSYFR…YLEETRPIPR (84 aa). Glutathione is bound by residues 14–19 and Gln-45; that span reads SSCSWR. An N6-succinyllysine modification is found at Lys-57. Residues Val-59, 71 to 72, Gln-111, and 115 to 117 each bind glutathione; these read QS and NLS. One can recognise a GST C-terminal domain in the interval 92 to 212; that stretch reads DPQKRAIVRM…HPRRQPDTPA (121 aa). Thr-136 carries the phosphothreonine modification. A Phosphoserine modification is found at Ser-137. Lys-177 carries the N6-succinyllysine modification. Phosphoserine is present on Ser-181.

This sequence belongs to the GST superfamily. Zeta family. In terms of assembly, homodimer. The cofactor is glutathione. Expressed in liver, kidney, seminal glands and breast.

Its subcellular location is the cytoplasm. It catalyses the reaction 4-maleylacetoacetate = 4-fumarylacetoacetate. It carries out the reaction RX + glutathione = an S-substituted glutathione + a halide anion + H(+). The protein operates within amino-acid degradation; L-phenylalanine degradation; acetoacetate and fumarate from L-phenylalanine: step 5/6. In terms of biological role, probable bifunctional enzyme showing minimal glutathione-conjugating activity with ethacrynic acid and 7-chloro-4-nitrobenz-2-oxa-1, 3-diazole and maleylacetoacetate isomerase activity. Also has low glutathione peroxidase activity with t-butyl and cumene hydroperoxides. Is able to catalyze the glutathione dependent oxygenation of dichloroacetic acid to glyoxylic acid. The polypeptide is Maleylacetoacetate isomerase (Gstz1) (Mus musculus (Mouse)).